Reading from the N-terminus, the 276-residue chain is Pantothenate synthetase (276 aa).

27-34 (MGNLHDGH) lines the ATP pocket. Catalysis depends on His-34, which acts as the Proton donor. Residue Gln-58 participates in (R)-pantoate binding. Gln-58 serves as a coordination point for beta-alanine. Residue 145-148 (GKKD) participates in ATP binding. Gln-151 serves as a coordination point for (R)-pantoate. ATP is bound by residues Ile-174 and 182 to 185 (LSSR).

It belongs to the pantothenate synthetase family. As to quaternary structure, homodimer.

It is found in the cytoplasm. The enzyme catalyses (R)-pantoate + beta-alanine + ATP = (R)-pantothenate + AMP + diphosphate + H(+). Its pathway is cofactor biosynthesis; (R)-pantothenate biosynthesis; (R)-pantothenate from (R)-pantoate and beta-alanine: step 1/1. In terms of biological role, catalyzes the condensation of pantoate with beta-alanine in an ATP-dependent reaction via a pantoyl-adenylate intermediate. The protein is Pantothenate synthetase of Aromatoleum aromaticum (strain DSM 19018 / LMG 30748 / EbN1) (Azoarcus sp. (strain EbN1)).